The chain runs to 714 residues: MVLTDSEMEFIRKELGRDPNPLEYGMLDVMFSEHCSYKSSRPVLGLFPTEGEDVIIGPGDDAGVVEITDELALVIGIESHNHPSAIEPYGGAGTGIGGILRDIISMGAMPVALLDSLRFGYLEDQKSRYLFEHVVRGISDYGNRVGVPTVAGEVEFDENFQLNPLVNVMCAGLVPKNDIKRGIAPRPGDVFLLMGGRTGRDGIHGVTFASEELTSSSELEDRPAVQVGDPFTKKMVMEASFEIMDEIEVSGVKDLGGGGLTCCISELVAKCDNGARVSLEAIPLREEGMTPYEIMLSESQERMIFVMAPDDVEAAMEICRKYELPAAVIGEVTDTGRMIVESEGEVIADLPAKLLADPPVVEREARKPQLPEGQVEVKHPPLKDTLLKLISSPNIASKRWVYRQYDHEVQIRTVVKPGDDAAVLRVDGTTGVALTVDCNSIHTKLDPYGGGAASVGEAIRNVVSMGAWPVCIVDCLNFGNPEKPEVFWQFRECVRGMADMAETFSTPVISGNVSFYNETEGVTVNPSPVVGVAGKLSLDSIKTLDFKDEGEEIVVIGETGPELGASEYLRTVHGIVDGKPPETDLKAEFEAAKAVKEIIDGSGNKVTAVHDCSAGGIAVAVAEMAIKSGIGARIDPMKIPGRFRNIHEALFSESNGRYIMTVRGSARDILGGLDVPWAVIGTTGGRTLEFGDVALDISELDDAYHGVIEAYMST.

His34 is a catalytic residue. Tyr37 lines the ATP pocket. A Mg(2+)-binding site is contributed by Glu78. Substrate-binding positions include 79–82 (SHNH) and Arg101. The active-site Proton acceptor is the His80. Asp102 provides a ligand contact to Mg(2+). Gln226 is a substrate binding site. Position 254 (Asp254) interacts with Mg(2+). Position 298–300 (298–300 (ESQ)) interacts with substrate. ATP is bound by residues Asp474 and Gly511. Mg(2+) is bound at residue Asn512. Ser514 lines the substrate pocket.

This sequence belongs to the FGAMS family. In terms of assembly, monomer. Part of the FGAM synthase complex composed of 1 PurL, 1 PurQ and 2 PurS subunits.

Its subcellular location is the cytoplasm. The catalysed reaction is N(2)-formyl-N(1)-(5-phospho-beta-D-ribosyl)glycinamide + L-glutamine + ATP + H2O = 2-formamido-N(1)-(5-O-phospho-beta-D-ribosyl)acetamidine + L-glutamate + ADP + phosphate + H(+). Its pathway is purine metabolism; IMP biosynthesis via de novo pathway; 5-amino-1-(5-phospho-D-ribosyl)imidazole from N(2)-formyl-N(1)-(5-phospho-D-ribosyl)glycinamide: step 1/2. Functionally, part of the phosphoribosylformylglycinamidine synthase complex involved in the purines biosynthetic pathway. Catalyzes the ATP-dependent conversion of formylglycinamide ribonucleotide (FGAR) and glutamine to yield formylglycinamidine ribonucleotide (FGAM) and glutamate. The FGAM synthase complex is composed of three subunits. PurQ produces an ammonia molecule by converting glutamine to glutamate. PurL transfers the ammonia molecule to FGAR to form FGAM in an ATP-dependent manner. PurS interacts with PurQ and PurL and is thought to assist in the transfer of the ammonia molecule from PurQ to PurL. This Methanothermobacter thermautotrophicus (strain ATCC 29096 / DSM 1053 / JCM 10044 / NBRC 100330 / Delta H) (Methanobacterium thermoautotrophicum) protein is Phosphoribosylformylglycinamidine synthase subunit PurL.